The following is a 1053-amino-acid chain: Integrin alpha-3 (1053 aa).

The signal sequence occupies residues Met1–Ala32. The Extracellular segment spans residues Phe33–Glu993. FG-GAP repeat units follow at residues Arg38–Cys103, Glu110–Leu171, Cys185–Ser235, Glu236–Leu293, Gln294–Pro355, Gln357–Arg412, and Gln416–Pro478. An N-linked (GlcNAc...) asparagine glycan is attached at Asn86. Intrachain disulfides connect Cys94/Cys103, Cys140/Cys162, and Cys185/Cys197. 2 cysteine pairs are disulfide-bonded: Cys486-Cys491 and Cys497-Cys551. 4 N-linked (GlcNAc...) asparagine glycosylation sites follow: Asn501, Asn512, Asn574, and Asn606. Residues Cys616 and Cys622 are joined by a disulfide bond. N-linked (GlcNAc...) asparagine glycans are attached at residues Asn657, Asn699, Asn843, and Asn859. An intrachain disulfide couples Cys695 to Cys704. Disulfide bonds link Cys848/Cys906 and Cys913/Cys918. Residues Pro865–Val890 are disordered. Residues Asn925, Asn928, Asn937, and Asn971 are each glycosylated (N-linked (GlcNAc...) asparagine). The helical transmembrane segment at Leu994–Phe1021 threads the bilayer. Residue Cys1018 is the site of S-palmitoyl cysteine attachment. Over Lys1022 to Tyr1053 the chain is Cytoplasmic.

Belongs to the integrin alpha chain family. As to quaternary structure, heterodimer of an alpha and a beta subunit. The alpha subunit is composed of a heavy and a light chain linked by a disulfide bond. Alpha-3 associates with beta-1. Interacts with HPS5. Interacts with FAP (seprase); the interaction occurs at the cell surface of invadopodia membrane in a collagen-dependent manner. As to expression, isoform 1 and isoform 2 are expressed in heart and brain. Only isoform 1 is detected in lung.

The protein localises to the cell membrane. It localises to the cell projection. It is found in the invadopodium membrane. Its subcellular location is the filopodium membrane. In terms of biological role, integrin alpha-3/beta-1 is a receptor for fibronectin, laminin, collagen, epiligrin, thrombospondin and CSPG4. Integrin alpha-3/beta-1 provides a docking site for FAP (seprase) at invadopodia plasma membranes in a collagen-dependent manner and hence may participate in the adhesion, formation of invadopodia and matrix degradation processes, promoting cell invasion. Alpha-3/beta-1 may mediate with LGALS3 the stimulation by CSPG4 of endothelial cells migration. This Mus musculus (Mouse) protein is Integrin alpha-3 (Itga3).